Reading from the N-terminus, the 288-residue chain is Oxaloacetate decarboxylase (288 aa).

Position 47 (Ser47) interacts with substrate. Asp85 provides a ligand contact to Mg(2+). Substrate is bound by residues Arg156 and His232.

Belongs to the isocitrate lyase/PEP mutase superfamily. Oxaloacetate decarboxylase family. Homotetramer; dimer of dimers. It depends on Mg(2+) as a cofactor.

The enzyme catalyses oxaloacetate + H(+) = pyruvate + CO2. Catalyzes the decarboxylation of oxaloacetate into pyruvate. Seems to play a role in maintaining cellular concentrations of bicarbonate and pyruvate. The sequence is that of Oxaloacetate decarboxylase from Bradyrhizobium sp. (strain ORS 278).